Here is a 962-residue protein sequence, read N- to C-terminus: MTKQTLTELEQHELFLTRHIGPDADEQQAMLNYVGAESLEDLTAQIVPESIRLGRELNVGASNGEAAGLAYIRQLADKNQVFKSYIGMGYHGTEVPNVILRNVLENPGWYTAYTPYQPEIAQGRLEAILNFQQLSIDLTGLDLASASLLDEATAAAEAMALAKRVSKAKKANTFFVADDVFPQTLDVVKTRAECFGFDIVTGPAAEAANHDDLFGALFQYTNRQGQLTDFTELFAQLRAKNVIVTVGADIMSLVLLKSPGAMGADVVFGSAQRFGVPMGFGGPHAAFFVSKDEHKRSMPGRIIGVSKDTRGKTALRMAMQTREQHIRREKANSNICTAQVLLANMASFYAVFHGPQGLKVIANRIHRLTDILAAGLAAKGVTVLNTQWFDTLSFKVDVDAVRARALAAGVNLRYDADGVVGVSLAETTTRADVAELFDIILGAGHGLDVAAIDADILAKGSSSIPAALVREEAFLTHPTFNSYHSETEMMRYIKRLENKDLALNHSMISLGSCTMKLNAAVEMIPVSWPEFANMHPFCPSEQAQGYTQLIGELSDWLVDITGYDAVCMQPNSGAQGEYAGLLAIRKYHESRGEGHRDVCLIPQSAHGTNPASAQLAGMKVVVTACDKQGNVDLDDLRAKAAEVAENLSCIMITYPSTHGVYEETVREICDIIHQHGGQVYLDGANMNAQVGLTAPGFIGADVSHLNLHKTFAIPHGGGGPGMGPIGVKKHLAPFVAGHAVVKQGIESDNNGAVSAAPFGSAGILPISWMYIKLLGSKGLKQSTQTAMLNANYLTKKLSEHYPVLYRGRNDRIAHECIIDMRPLKEASGVTEMDVAKRLNDYGFHAPTMSFPVAGTLMIEPTESESKAELDRFIEAMVAIRGEIARVESGEWPVDNNPLANAPHTMDDIMDPAFDSRPYSRELAVFPTESVRANKFWPTVNRIDDVYGDRNLFCACVPMSDYE.

K709 carries the N6-(pyridoxal phosphate)lysine modification.

This sequence belongs to the GcvP family. In terms of assembly, the glycine cleavage system is composed of four proteins: P, T, L and H. The cofactor is pyridoxal 5'-phosphate.

It carries out the reaction N(6)-[(R)-lipoyl]-L-lysyl-[glycine-cleavage complex H protein] + glycine + H(+) = N(6)-[(R)-S(8)-aminomethyldihydrolipoyl]-L-lysyl-[glycine-cleavage complex H protein] + CO2. Functionally, the glycine cleavage system catalyzes the degradation of glycine. The P protein binds the alpha-amino group of glycine through its pyridoxal phosphate cofactor; CO(2) is released and the remaining methylamine moiety is then transferred to the lipoamide cofactor of the H protein. The protein is Glycine dehydrogenase (decarboxylating) of Shewanella amazonensis (strain ATCC BAA-1098 / SB2B).